The primary structure comprises 736 residues: 1,4-alpha-glucan branching enzyme GlgB (736 aa).

Asp419 serves as the catalytic Nucleophile. Glu472 functions as the Proton donor in the catalytic mechanism.

It belongs to the glycosyl hydrolase 13 family. GlgB subfamily. Monomer.

It catalyses the reaction Transfers a segment of a (1-&gt;4)-alpha-D-glucan chain to a primary hydroxy group in a similar glucan chain.. It participates in glycan biosynthesis; glycogen biosynthesis. In terms of biological role, catalyzes the formation of the alpha-1,6-glucosidic linkages in glycogen by scission of a 1,4-alpha-linked oligosaccharide from growing alpha-1,4-glucan chains and the subsequent attachment of the oligosaccharide to the alpha-1,6 position. The sequence is that of 1,4-alpha-glucan branching enzyme GlgB from Rhizobium meliloti (strain 1021) (Ensifer meliloti).